Reading from the N-terminus, the 505-residue chain is Histidine ammonia-lyase (505 aa).

The segment at residues 141-143 (ASG) is a cross-link (5-imidazolinone (Ala-Gly)). Ser142 is subject to 2,3-didehydroalanine (Ser).

Belongs to the PAL/histidase family. Contains an active site 4-methylidene-imidazol-5-one (MIO), which is formed autocatalytically by cyclization and dehydration of residues Ala-Ser-Gly.

The protein resides in the cytoplasm. It carries out the reaction L-histidine = trans-urocanate + NH4(+). It functions in the pathway amino-acid degradation; L-histidine degradation into L-glutamate; N-formimidoyl-L-glutamate from L-histidine: step 1/3. In Bacillus cereus (strain ATCC 10987 / NRS 248), this protein is Histidine ammonia-lyase.